The primary structure comprises 1111 residues: Histone deacetylase 5 (1111 aa).

Lys35 participates in a covalent cross-link: Glycyl lysine isopeptide (Lys-Gly) (interchain with G-Cter in SUMO2). Disordered stretches follow at residues 40–63, 107–136, and 187–272; these read GAMPSSMGGGGGGSPSPVELRGAL, RQHEVQLQKHLKQQQEMLAAKRQQELEQQR, and KEPT…SSPL. Over residues 238–249 the composition is skewed to basic and acidic residues; sequence DSRDDFPLRKTA. Ser250 is subject to Phosphoserine; by AMPK, CaMK1, SIK1 and PKD/PRKD1. Over residues 263 to 272 the composition is skewed to basic and acidic residues; sequence KVAERRSSPL. Thr283 carries the post-translational modification Phosphothreonine; by PKC. The tract at residues 474-495 is disordered; sequence TVGKLPRHRPLSRTQSSPLPQS. The span at 485–495 shows a compositional bias: low complexity; the sequence is SRTQSSPLPQS. A Phosphoserine; by AMPK, CaMK1, SIK1 and PKD/PRKD1 modification is found at Ser489. An N6-acetyllysine modification is found at Lys524. Disordered regions lie at residues 527-611 and 645-666; these read TKTG…LEES and LGRTQSSPAAPGSMKSPPDQPT. A compositionally biased stretch (acidic residues) spans 572–610; that stretch reads STQEDLEEEEDEEEEDEDCIQVKDEEGESGPDEGPDLEE. Ser600 and Ser650 each carry phosphoserine. Residues 671 to 1017 form a histone deacetylase region; that stretch reads TTGVVYDTFM…VSALLSVELQ (347 aa). Cys685, Cys687, His693, and Cys770 together coordinate Zn(2+). Residue His822 is part of the active site. The short motif at 1070 to 1109 is the Nuclear export signal element; it reads EEAETVSAMALLSVGAEQAQAVATQEHSPRPAEEPMEQEP. Residues 1086–1111 are disordered; it reads EQAQAVATQEHSPRPAEEPMEQEPTL. Ser1097 bears the Phosphoserine mark.

Belongs to the histone deacetylase family. HD type 2 subfamily. Interacts with AHRR, BAHD1, BCOR, HDAC7, HDAC9, CTBP1, MEF2C, NCOR2, NRIP1, PHB2 and a 14-3-3 chaperone protein. Interacts with BCL6, DDIT3/CHOP, GRK5, KDM5B and MYOCD. Interacts with EP300 in the presence of TFAP2C. Interacts with ANKRA2. Interacts with CUL7 (as part of the 3M complex); negatively regulated by ANKRA2. Interacts with ZBTB7B; the interaction allows the recruitment of HDAC4 on CD8 loci for deacetylation and possible inhibition of CD8 genes expression. Interacts with RARA. Phosphorylated by AMPK, CaMK1, SIK1 and PRKD1 at Ser-250 and Ser-489. The phosphorylation is required for the export to the cytoplasm and inhibition. Phosphorylated by the PKC kinases PKN1 and PKN2, impairing nuclear import. Phosphorylated by GRK5, leading to nuclear export of HDAC5 and allowing MEF2-mediated transcription. In terms of processing, ubiquitinated. Polyubiquitination however does not lead to its degradation.

The protein localises to the nucleus. It is found in the cytoplasm. It catalyses the reaction N(6)-acetyl-L-lysyl-[histone] + H2O = L-lysyl-[histone] + acetate. Functionally, responsible for the deacetylation of lysine residues on the N-terminal part of the core histones (H2A, H2B, H3 and H4). Histone deacetylation gives a tag for epigenetic repression and plays an important role in transcriptional regulation, cell cycle progression and developmental events. Histone deacetylases act via the formation of large multiprotein complexes. Involved in muscle maturation by repressing transcription of myocyte enhancer MEF2C. During muscle differentiation, it shuttles into the cytoplasm, allowing the expression of myocyte enhancer factors. Serves as a corepressor of RARA and causes its deacetylation. In association with RARA, plays a role in the repression of microRNA-10a and thereby in the inflammatory response. In Cricetulus griseus (Chinese hamster), this protein is Histone deacetylase 5 (HDAC5).